The sequence spans 644 residues: 3D-(3,5/4)-trihydroxycyclohexane-1,2-dione hydrolase (644 aa).

Residue Glu65 coordinates thiamine diphosphate. Residues Ser442 to Gly522 are thiamine pyrophosphate binding. Mg(2+) contacts are provided by Asp493 and Asn520.

Belongs to the TPP enzyme family. The cofactor is Mg(2+). Thiamine diphosphate serves as cofactor.

It carries out the reaction 3D-3,5/4-trihydroxycyclohexane-1,2-dione + H2O = 5-deoxy-D-glucuronate + H(+). The protein operates within polyol metabolism; myo-inositol degradation into acetyl-CoA; acetyl-CoA from myo-inositol: step 3/7. Involved in the cleavage of the C1-C2 bond of 3D-(3,5/4)-trihydroxycyclohexane-1,2-dione (THcHDO) to yield 5-deoxy-glucuronate (5DG). The protein is 3D-(3,5/4)-trihydroxycyclohexane-1,2-dione hydrolase of Bacillus anthracis (strain A0248).